The sequence spans 411 residues: Cytosolic Fe-S cluster assembly factor narfl (411 aa).

[4Fe-4S] cluster is bound by residues Cys11, Cys124, Cys180, Cys329, and Cys333.

The protein belongs to the NARF family. As to quaternary structure, component of the CIA complex.

Functionally, component of the cytosolic iron-sulfur protein assembly (CIA) complex, a multiprotein complex that mediates the incorporation of iron-sulfur cluster into extramitochondrial Fe/S proteins. This chain is Cytosolic Fe-S cluster assembly factor narfl (narfl), found in Danio rerio (Zebrafish).